The primary structure comprises 490 residues: Aspartyl/glutamyl-tRNA(Asn/Gln) amidotransferase subunit B (490 aa).

Belongs to the GatB/GatE family. GatB subfamily. In terms of assembly, heterotrimer of A, B and C subunits.

It catalyses the reaction L-glutamyl-tRNA(Gln) + L-glutamine + ATP + H2O = L-glutaminyl-tRNA(Gln) + L-glutamate + ADP + phosphate + H(+). The catalysed reaction is L-aspartyl-tRNA(Asn) + L-glutamine + ATP + H2O = L-asparaginyl-tRNA(Asn) + L-glutamate + ADP + phosphate + 2 H(+). In terms of biological role, allows the formation of correctly charged Asn-tRNA(Asn) or Gln-tRNA(Gln) through the transamidation of misacylated Asp-tRNA(Asn) or Glu-tRNA(Gln) in organisms which lack either or both of asparaginyl-tRNA or glutaminyl-tRNA synthetases. The reaction takes place in the presence of glutamine and ATP through an activated phospho-Asp-tRNA(Asn) or phospho-Glu-tRNA(Gln). This Methylorubrum extorquens (strain CM4 / NCIMB 13688) (Methylobacterium extorquens) protein is Aspartyl/glutamyl-tRNA(Asn/Gln) amidotransferase subunit B.